We begin with the raw amino-acid sequence, 495 residues long: Autoinducer 2 import ATP-binding protein LsrA (495 aa).

ABC transporter domains are found at residues 5 to 233 and 256 to 494; these read IEAH…TPVS and AQDF…FGGQ. 37–44 is an ATP binding site; it reads GGNGAGKS.

Belongs to the ABC transporter superfamily. AI-2 autoinducer porter (TC 3.A.1.2.8) family. As to quaternary structure, the complex is composed of two ATP-binding proteins (LsrA), two transmembrane proteins (LsrC and LsrD) and a solute-binding protein (LsrB).

The protein resides in the cell inner membrane. The enzyme catalyses ATP + H2O + (2R,4S)-2-methyl-2,3,3,4-tetrahydroxytetrahydrofuran-[AI-2-binding protein]Side 1 = ADP + phosphate + (2R,4S)-2-methyl-2,3,3,4-tetrahydroxytetrahydrofuranSide 2 + [AI-2-binding protein]Side 1.. Part of the ABC transporter complex LsrABCD involved in autoinducer 2 (AI-2) import. Responsible for energy coupling to the transport system. The chain is Autoinducer 2 import ATP-binding protein LsrA (lsrA) from Enterobacter sp. (strain 638).